A 485-amino-acid chain; its full sequence is Glutamyl-tRNA(Gln) amidotransferase subunit A (485 aa).

Residues Lys-80 and Ser-155 each act as charge relay system in the active site. The active-site Acyl-ester intermediate is the Ser-179.

This sequence belongs to the amidase family. GatA subfamily. In terms of assembly, heterotrimer of A, B and C subunits.

The catalysed reaction is L-glutamyl-tRNA(Gln) + L-glutamine + ATP + H2O = L-glutaminyl-tRNA(Gln) + L-glutamate + ADP + phosphate + H(+). Its function is as follows. Allows the formation of correctly charged Gln-tRNA(Gln) through the transamidation of misacylated Glu-tRNA(Gln) in organisms which lack glutaminyl-tRNA synthetase. The reaction takes place in the presence of glutamine and ATP through an activated gamma-phospho-Glu-tRNA(Gln). This chain is Glutamyl-tRNA(Gln) amidotransferase subunit A, found in Endomicrobium trichonymphae.